Reading from the N-terminus, the 721-residue chain is Catalase-peroxidase (721 aa).

Residues tryptophan 89–tyrosine 212 constitute a cross-link (tryptophyl-tyrosyl-methioninium (Trp-Tyr) (with M-238)). Histidine 90 (proton acceptor) is an active-site residue. Residues tyrosine 212 to methionine 238 constitute a cross-link (tryptophyl-tyrosyl-methioninium (Tyr-Met) (with W-89)). Residue histidine 253 coordinates heme b.

This sequence belongs to the peroxidase family. Peroxidase/catalase subfamily. Homodimer or homotetramer. Requires heme b as cofactor. Post-translationally, formation of the three residue Trp-Tyr-Met cross-link is important for the catalase, but not the peroxidase activity of the enzyme.

The catalysed reaction is H2O2 + AH2 = A + 2 H2O. The enzyme catalyses 2 H2O2 = O2 + 2 H2O. Functionally, bifunctional enzyme with both catalase and broad-spectrum peroxidase activity. This Shewanella baltica (strain OS195) protein is Catalase-peroxidase.